The chain runs to 1097 residues: Leukemia inhibitory factor receptor (1097 aa).

Residues 1-44 (MMDIYVCLKRPSWMVDNKRMRTASNFQWLLSTFILLYLMNQVNS) form the signal peptide. Residues 45–833 (QKKGAPHDLK…SMYVVTKENS (789 aa)) are Extracellular-facing. The Fibronectin type-III 1 domain maps to 49 to 138 (APHDLKCVTN…EQNVSLIPDT (90 aa)). 2 cysteine pairs are disulfide-bonded: cysteine 55/cysteine 65 and cysteine 82/cysteine 90. N-linked (GlcNAc...) asparagine glycans are attached at residues asparagine 64, asparagine 85, asparagine 131, asparagine 143, asparagine 191, asparagine 243, and asparagine 303. Residues cysteine 213 and cysteine 270 are joined by a disulfide bond. Fibronectin type-III domains lie at 335 to 434 (TPQQ…VYPH), 435 to 534 (TPTS…TEAS), 538 to 629 (GPDT…IPND), 627 to 719 (PNDD…IGYI), and 724 to 833 (PIVA…KENS). A disulfide bridge links cysteine 341 with cysteine 351. Asparagine 390, asparagine 407, asparagine 426, asparagine 445, asparagine 481, and asparagine 489 each carry an N-linked (GlcNAc...) asparagine glycan. Residues cysteine 466 and cysteine 511 are joined by a disulfide bond. The WSXWS motif motif lies at 519–523 (WSKWS). Asparagine 572, asparagine 652, asparagine 663, asparagine 680, asparagine 729, and asparagine 787 each carry an N-linked (GlcNAc...) asparagine glycan. The helical transmembrane segment at 834-858 (VGLIIAILIPVAVAVIVGVVTSILC) threads the bilayer. Residues 859–1097 (YRKREWIKET…TNFFQNKPND (239 aa)) lie on the Cytoplasmic side of the membrane. The short motif at 869–877 (FYPDIPNPE) is the Box 1 motif element. The residue at position 927 (serine 927) is a Phosphoserine. Residues 983–1005 (PQAKPEEEQENDPVGGAGYKPQM) are disordered. Serine 1044 bears the Phosphoserine mark. Residues 1066-1097 (RQFLIPPKDEDSPKSNGGGWSFTNFFQNKPND) form a disordered region. Residues 1086 to 1097 (SFTNFFQNKPND) show a composition bias toward polar residues.

This sequence belongs to the type I cytokine receptor family. Type 2 subfamily. As to quaternary structure, heterodimer composed of LIFR and IL6ST. The heterodimer formed by LIFR and IL6ST interacts with the complex formed by CNTF and CNTFR.

The protein resides in the cell membrane. It localises to the secreted. Its function is as follows. Signal-transducing molecule. May have a common pathway with IL6ST. The soluble form inhibits the biological activity of LIF by blocking its binding to receptors on target cells. This chain is Leukemia inhibitory factor receptor (LIFR), found in Homo sapiens (Human).